The sequence spans 682 residues: Potassium-transporting ATPase ATP-binding subunit (682 aa).

The next 4 membrane-spanning stretches (helical) occupy residues 35–55, 62–82, 219–239, and 254–274; these read VMFIVWVGSLLTTLLAIAMAG, ATFTAAVSIWLWFTVLFANFA, IALTILLIALTLVFLLATATI, and VLVALLVCLIPTTIGGLLSAI. The active-site 4-aspartylphosphate intermediate is aspartate 307. Residues aspartate 344, glutamate 348, 377–384, and lysine 395 each bind ATP; that span reads FTAQTRMS. Residues aspartate 518 and aspartate 522 each coordinate Mg(2+). Transmembrane regions (helical) follow at residues 588–608, 616–636, and 656–676; these read FAIIPAAFAAVYPQLAMLNVM, AILSAVIFNALIIVFLIPLAL, and IYGLGGLLVPFIGIKAIDLLL.

It belongs to the cation transport ATPase (P-type) (TC 3.A.3) family. Type IA subfamily. The system is composed of three essential subunits: KdpA, KdpB and KdpC.

The protein resides in the cell inner membrane. It catalyses the reaction K(+)(out) + ATP + H2O = K(+)(in) + ADP + phosphate + H(+). Its function is as follows. Part of the high-affinity ATP-driven potassium transport (or Kdp) system, which catalyzes the hydrolysis of ATP coupled with the electrogenic transport of potassium into the cytoplasm. This subunit is responsible for energy coupling to the transport system and for the release of the potassium ions to the cytoplasm. The polypeptide is Potassium-transporting ATPase ATP-binding subunit (Klebsiella pneumoniae subsp. pneumoniae (strain ATCC 700721 / MGH 78578)).